The following is a 2264-amino-acid chain: Protein Ycf2 (2264 aa).

1611–1618 (GSIGTGRS) contacts ATP.

This sequence belongs to the Ycf2 family.

The protein localises to the plastid. It is found in the chloroplast stroma. Functionally, probable ATPase of unknown function. Its presence in a non-photosynthetic plant (Epifagus virginiana) and experiments in tobacco indicate that it has an essential function which is probably not related to photosynthesis. In Lactuca sativa (Garden lettuce), this protein is Protein Ycf2.